The following is a 215-amino-acid chain: Large ribosomal subunit protein uL1 (215 aa).

It belongs to the universal ribosomal protein uL1 family. In terms of assembly, part of the 50S ribosomal subunit.

Functionally, binds directly to 23S rRNA. Probably involved in E site tRNA release. Protein L1 is also a translational repressor protein, it controls the translation of its operon by binding to its mRNA. The polypeptide is Large ribosomal subunit protein uL1 (Staphylothermus marinus (strain ATCC 43588 / DSM 3639 / JCM 9404 / F1)).